The following is an 86-amino-acid chain: Small ribosomal subunit protein bS20 (86 aa).

Belongs to the bacterial ribosomal protein bS20 family.

Its function is as follows. Binds directly to 16S ribosomal RNA. In Novosphingobium aromaticivorans (strain ATCC 700278 / DSM 12444 / CCUG 56034 / CIP 105152 / NBRC 16084 / F199), this protein is Small ribosomal subunit protein bS20.